Here is a 54-residue protein sequence, read N- to C-terminus: Large ribosomal subunit protein bL33 (54 aa).

This sequence belongs to the bacterial ribosomal protein bL33 family.

This chain is Large ribosomal subunit protein bL33, found in Rhodopirellula baltica (strain DSM 10527 / NCIMB 13988 / SH1).